The following is a 1189-amino-acid chain: Phosphinothricin tripeptide synthetase PhsB (1189 aa).

The region spanning 5-80 is the Carrier 1 domain; it reads QTDDVVTGRI…ALAKRIRASR (76 aa). S40 is modified (O-(pantetheine 4'-phosphoryl)serine). Disordered regions lie at residues 75-97 and 454-476; these read RIRA…PVDS and TPDR…GGDT. The interval 100–541 is condensation; the sequence is TAPLTFQQEP…VALLPLQEPA (442 aa). Residues 455 to 472 show a composition bias toward basic and acidic residues; it reads PDRDGREPGEGPFAREES. Residues 572 to 969 form an adenylation region; it reads AQAHRTPDAV…GREDGQVKLR (398 aa). Residues 1045–1081 form a disordered region; that stretch reads DRVPLTPSGKTDRKALPDPAAGEQPRSGRGAAPGTPA. One can recognise a Carrier 2 domain in the interval 1076–1151; it reads APGTPAEREL…DFALAVVTAQ (76 aa). S1111 bears the O-(pantetheine 4'-phosphoryl)serine mark.

Belongs to the NRP synthetase family. Pantetheine 4'-phosphate serves as cofactor.

It catalyses the reaction holo-[peptidyl-carrier protein] + L-alanine + ATP = L-alanyl-[peptidyl-carrier protein] + AMP + diphosphate. It functions in the pathway secondary metabolite biosynthesis; bialaphos biosynthesis. Functionally, involved in the biosynthesis of phosphinothricin tripeptide (PTT), also known as bialaphos (BA), a natural-product antibiotic and potent herbicide. Adenylates L-alanine and loads it onto a peptidyl carrier domain via a thioester linkage to the phosphopanthetheine moiety. Shows weaker activity with aminobutyric acid and L-serine. This is Phosphinothricin tripeptide synthetase PhsB from Streptomyces viridochromogenes (strain DSM 40736 / JCM 4977 / BCRC 1201 / Tue 494).